We begin with the raw amino-acid sequence, 762 residues long: Molybdenum cofactor sulfurase 2 (762 aa).

Residue Lys-234 is modified to N6-(pyridoxal phosphate)lysine. Cys-400 is an active-site residue. One can recognise an MOSC domain in the interval 590 to 738; it reads AWISKALRMP…LECGSILEPV (149 aa).

It belongs to the class-V pyridoxal-phosphate-dependent aminotransferase family. MOCOS subfamily. The cofactor is pyridoxal 5'-phosphate.

It catalyses the reaction Mo-molybdopterin + L-cysteine + AH2 = thio-Mo-molybdopterin + L-alanine + A + H2O. Sulfurates the molybdenum cofactor. Sulfation of molybdenum is essential for xanthine dehydrogenase (XDH) and aldehyde oxidase (ADO) enzymes in which molybdenum cofactor is liganded by 1 oxygen and 1 sulfur atom in active form. This Aedes aegypti (Yellowfever mosquito) protein is Molybdenum cofactor sulfurase 2.